The chain runs to 101 residues: Urease subunit beta (101 aa).

The protein belongs to the urease beta subunit family. In terms of assembly, heterotrimer of UreA (gamma), UreB (beta) and UreC (alpha) subunits. Three heterotrimers associate to form the active enzyme.

The protein localises to the cytoplasm. The enzyme catalyses urea + 2 H2O + H(+) = hydrogencarbonate + 2 NH4(+). Its pathway is nitrogen metabolism; urea degradation; CO(2) and NH(3) from urea (urease route): step 1/1. In Burkholderia cenocepacia (strain ATCC BAA-245 / DSM 16553 / LMG 16656 / NCTC 13227 / J2315 / CF5610) (Burkholderia cepacia (strain J2315)), this protein is Urease subunit beta.